Reading from the N-terminus, the 419-residue chain is Tetraspanning orphan receptor (419 aa).

Residues 1–28 are Cytoplasmic-facing; it reads MPRAPALLTNDARHQFTCCLCLHVRTGT. Residues 29–49 traverse the membrane as a helical segment; it reads IIFGITQIIIQLVFISFLFLM. Residues 50–165 are Extracellular-facing; the sequence is TFNPRLIPED…EVKIKHFSPY (116 aa). A helical transmembrane segment spans residues 166–186; it reads IAVCVTTFSLAFCCFMVHGAI. The Cytoplasmic portion of the chain corresponds to 187-193; sequence TKQPTHL. A helical transmembrane segment spans residues 194–214; that stretch reads LPFFFIQVFDLIICLIHILGF. The Extracellular portion of the chain corresponds to 215 to 240; that stretch reads MSSTSDLRLMIHTKTGPIYIKSTGFT. A helical membrane pass occupies residues 241-261; the sequence is FIILSISCMMLAFKAYCLGMV. Residues 262-419 lie on the Cytoplasmic side of the membrane; it reads WDCYKYLMLN…SAPSNAHSSC (158 aa). Low complexity predominate over residues 303 to 316; the sequence is NNSIGNSGSPNEPN. A disordered region spans residues 303–328; it reads NNSIGNSGSPNEPNTRPRPEPITYDP.

Interacts (via N-terminal extracellular domain) with human C2a. Post-translationally, phosphorylated on tyrosine residues.

It is found in the cell membrane. Its function is as follows. Cell surface receptor that binds to human complement C2a protein. This results in inhibition of the classical and lectin pathways of complement activation, probably due to interference with binding of C2a to C4b and interference with cleavage by C1 or MASP2 such that C3 convertase cannot be formed. This infers resistance to complement-mediated cell lysis, allowing parasite survival and infection. The polypeptide is Tetraspanning orphan receptor (Schistosoma mansoni (Blood fluke)).